The primary structure comprises 191 residues: MAP6 domain-containing protein 1 (191 aa).

S-palmitoyl cysteine attachment occurs at residues Cys5, Cys10, and Cys11. Residues 31-106 form a disordered region; the sequence is HGYSDPGSEE…RGQSSAPPTR (76 aa). Residues Ser38 and Ser41 each carry the phosphoserine modification. Mn regions lie at residues 123–136 and 158–170; these read TTSY…WTGV and DPSP…VPEV. Ser160 is subject to Phosphoserine.

Belongs to the STOP family. In terms of assembly, interacts with calmodulin. Palmitoylated. Palmitoylation enhances association with microtubules. As to expression, expressed in brain. Found in neurons in primary cultures, but absent in glial cells.

Its subcellular location is the golgi apparatus. The protein localises to the cytoplasm. It is found in the cytoskeleton. Its function is as follows. May have microtubule-stabilizing activity. The chain is MAP6 domain-containing protein 1 (Map6d1) from Mus musculus (Mouse).